Consider the following 95-residue polypeptide: Small ribosomal subunit protein bS6 (95 aa).

The protein belongs to the bacterial ribosomal protein bS6 family.

In terms of biological role, binds together with bS18 to 16S ribosomal RNA. This is Small ribosomal subunit protein bS6 from Caldanaerobacter subterraneus subsp. tengcongensis (strain DSM 15242 / JCM 11007 / NBRC 100824 / MB4) (Thermoanaerobacter tengcongensis).